The following is a 516-amino-acid chain: Maturase K (516 aa).

Belongs to the intron maturase 2 family. MatK subfamily.

It localises to the plastid. The protein localises to the chloroplast. In terms of biological role, usually encoded in the trnK tRNA gene intron. Probably assists in splicing its own and other chloroplast group II introns. The sequence is that of Maturase K from Chara globularis (Fragile stonewort).